The chain runs to 547 residues: Ganoderic acid synthetase CYP5150L8 (547 aa).

Residues 2 to 22 (PDSSLVLVAIAGAAYIFWLVF) traverse the membrane as a helical segment. Position 487 (Cys487) interacts with heme.

This sequence belongs to the cytochrome P450 family. Heme is required as a cofactor.

It is found in the membrane. The catalysed reaction is lanosterol + reduced [NADPH--hemoprotein reductase] + O2 = 26-hydroxylanosterol + oxidized [NADPH--hemoprotein reductase] + H2O + H(+). The enzyme catalyses 26-hydroxylanosterol + reduced [NADPH--hemoprotein reductase] + O2 = 26-oxolanosterol + oxidized [NADPH--hemoprotein reductase] + 2 H2O + H(+). It carries out the reaction 26-oxolanosterol + reduced [NADPH--hemoprotein reductase] + O2 = 3beta-hydroxy-lanosta-8, 24-dien-26-oate + oxidized [NADPH--hemoprotein reductase] + H2O + 2 H(+). It functions in the pathway secondary metabolite biosynthesis; terpenoid biosynthesis. In terms of biological role, cytochrome P450 monooxygenase that is involved in the biosynthesis of ganoderic acids (GA), a group of highly oxygenated lanostane-type triterpenoids which well recognized as a main group of unique bioactive compounds in the medicinal mushroom Ganoderma lucidum. CYP5150L8 alone is able to catalyze the three-step oxidations at C-26 from lanosterol to 3-hydroxy-lanosta-8,24-dien-26-oic acid (also called ganoderic acid Z or HLDOA). The methyl group of lanosterol at C-26 is first oxidized into hydroxyl group to form 3-hydroxy-lanosta-8,24-dien-26-ol (HLDO). The hydroxyl group at C-26 of HLDO is further converted into a formyl group to form 3-hydroxy-lanosta-8,24-dien-26-al (HLDA). Finally, the formyl group is oxidized into a carboxyl group to produce 3-hydroxy-lanosta-8,24-dien-26-oic acid (HLDOA). The sequence is that of Ganoderic acid synthetase CYP5150L8 from Ganoderma lucidum (Ling zhi medicinal fungus).